The chain runs to 142 residues: Galactose-6-phosphate isomerase subunit LacA (142 aa).

The protein belongs to the LacAB/RpiB family. Heteromultimeric protein consisting of LacA and LacB.

The catalysed reaction is aldehydo-D-galactose 6-phosphate = keto-D-tagatose 6-phosphate. The protein operates within carbohydrate metabolism; D-galactose 6-phosphate degradation; D-tagatose 6-phosphate from D-galactose 6-phosphate: step 1/1. The polypeptide is Galactose-6-phosphate isomerase subunit LacA (Streptococcus mutans serotype c (strain ATCC 700610 / UA159)).